The sequence spans 888 residues: Patched domain-containing protein 1 (888 aa).

A helical membrane pass occupies residues 20–40; it reads FIASHPVFFASAPVLISILLG. 3 N-linked (GlcNAc...) asparagine glycosylation sites follow: asparagine 77, asparagine 133, and asparagine 167. The SSD domain maps to 268–427; the sequence is SERYLVTSLI…LSFYGSSLVF (160 aa). 2 helical membrane passes run 273-293 and 298-318; these read VTSL…QDCV and WLGL…AGII. N-linked (GlcNAc...) asparagine glycans are attached at residues asparagine 319 and asparagine 326. Transmembrane regions (helical) follow at residues 328-348, 373-393, 407-427, and 502-522; these read TFLG…FEML, LSFS…ASPF, CIAI…SLVF, and PFVV…YLQV. N-linked (GlcNAc...) asparagine glycans are attached at residues asparagine 568, asparagine 599, and asparagine 608. Helical transmembrane passes span 707–727 and 738–758; these read ALFL…NVWI and VIGF…LCLI. N-linked (GlcNAc...) asparagine glycosylation is present at asparagine 762. A helical membrane pass occupies residues 795 to 815; sequence GVAILQSYLCYIVGLIPLAAV. Residue asparagine 818 is glycosylated (N-linked (GlcNAc...) asparagine). Residues 826 to 846 traverse the membrane as a helical segment; it reads CLFLIAFVTFFHCFAILPVIL.

The protein belongs to the patched family. In terms of tissue distribution, widely expressed, including in various regions of the brain with highest expression in the gray and white cerebellum, followed by the cerebellar vermis and the pituitary gland.

The protein resides in the cell membrane. The protein localises to the cell projection. It is found in the dendritic spine. Its function is as follows. Required for the development and function of the thalamic reticular nucleus (TRN), a part of the thalamus that is critical for thalamocortical transmission, generation of sleep rhythms, sensorimotor processing and attention. Can bind cholesterol in vitro. This chain is Patched domain-containing protein 1, found in Homo sapiens (Human).